We begin with the raw amino-acid sequence, 232 residues long: Enolase-phosphatase E1 (232 aa).

It belongs to the HAD-like hydrolase superfamily. MasA/MtnC family. As to quaternary structure, monomer. Requires Mg(2+) as cofactor.

It carries out the reaction 5-methylsulfanyl-2,3-dioxopentyl phosphate + H2O = 1,2-dihydroxy-5-(methylsulfanyl)pent-1-en-3-one + phosphate. It functions in the pathway amino-acid biosynthesis; L-methionine biosynthesis via salvage pathway; L-methionine from S-methyl-5-thio-alpha-D-ribose 1-phosphate: step 3/6. Its pathway is amino-acid biosynthesis; L-methionine biosynthesis via salvage pathway; L-methionine from S-methyl-5-thio-alpha-D-ribose 1-phosphate: step 4/6. Bifunctional enzyme that catalyzes the enolization of 2,3-diketo-5-methylthiopentyl-1-phosphate (DK-MTP-1-P) into the intermediate 2-hydroxy-3-keto-5-methylthiopentenyl-1-phosphate (HK-MTPenyl-1-P), which is then dephosphorylated to form the acireductone 1,2-dihydroxy-3-keto-5-methylthiopentene (DHK-MTPene). This chain is Enolase-phosphatase E1, found in Xanthomonas axonopodis pv. citri (strain 306).